The primary structure comprises 162 residues: Large ribosomal subunit protein uL10 (162 aa).

This sequence belongs to the universal ribosomal protein uL10 family. In terms of assembly, part of the ribosomal stalk of the 50S ribosomal subunit. The N-terminus interacts with L11 and the large rRNA to form the base of the stalk. The C-terminus forms an elongated spine to which L12 dimers bind in a sequential fashion forming a multimeric L10(L12)X complex.

Forms part of the ribosomal stalk, playing a central role in the interaction of the ribosome with GTP-bound translation factors. The sequence is that of Large ribosomal subunit protein uL10 from Vibrio parahaemolyticus serotype O3:K6 (strain RIMD 2210633).